The primary structure comprises 162 residues: Cyclic pyranopterin monophosphate synthase (162 aa).

Substrate contacts are provided by residues 75-77 (MCH) and 115-116 (ME). Asp-130 is a catalytic residue.

It belongs to the MoaC family. As to quaternary structure, homohexamer; trimer of dimers.

It carries out the reaction (8S)-3',8-cyclo-7,8-dihydroguanosine 5'-triphosphate = cyclic pyranopterin phosphate + diphosphate. The protein operates within cofactor biosynthesis; molybdopterin biosynthesis. Catalyzes the conversion of (8S)-3',8-cyclo-7,8-dihydroguanosine 5'-triphosphate to cyclic pyranopterin monophosphate (cPMP). This Geobacillus thermodenitrificans (strain NG80-2) protein is Cyclic pyranopterin monophosphate synthase.